We begin with the raw amino-acid sequence, 169 residues long: MLYSKKKEFVKFLEGIYKNANTIVAIHYHGLTVAQLTQIRKDLRVSGARLKIVKNTLAKIAVANLKVKQVDIFSGPIAIAYSEDYITVPKVILRFADQYPSLKVVGGFVDQKVATMNDIEQLASLATSESHKGNFLSLLQIPIRRFATVSHAPLVKLVTILKNYVNNKS.

Belongs to the universal ribosomal protein uL10 family. Part of the ribosomal stalk of the 50S ribosomal subunit. The N-terminus interacts with L11 and the large rRNA to form the base of the stalk. The C-terminus forms an elongated spine to which L12 dimers bind in a sequential fashion forming a multimeric L10(L12)X complex.

Functionally, forms part of the ribosomal stalk, playing a central role in the interaction of the ribosome with GTP-bound translation factors. This is Large ribosomal subunit protein uL10 from Orientia tsutsugamushi (strain Ikeda) (Rickettsia tsutsugamushi).